The following is a 533-amino-acid chain: Monogalactosyldiacylglycerol synthase 1, chloroplastic (533 aa).

Residues His155 and Pro189 each coordinate a 1,2-diacyl-sn-glycero-3-phospho-(1'-sn-glycerol). His155 contributes to the UDP binding site. The required for binding to diacyl glycerol stretch occupies residues 192–215 (QLPRSYNFLVKHGTLWKMTYYGTS). Residues Arg324, Phe413, Ile414, 434–438 (GTIAE), and Glu456 contribute to the UDP site.

This sequence belongs to the glycosyltransferase 28 family. In terms of assembly, homodimer. Expressed in roots, stems, leaves, flowers, siliques and seeds.

It is found in the plastid. It localises to the chloroplast inner membrane. The enzyme catalyses a 1,2-diacyl-sn-glycerol + UDP-alpha-D-galactose = a 1,2-diacyl-3-O-(beta-D-galactosyl)-sn-glycerol + UDP + H(+). It carries out the reaction 1,2-di-(9Z,12Z-octadecadienoyl)-sn-glycerol + UDP-alpha-D-galactose = 1,2-di-(9Z,12Z-octadecadienoyl)-3-beta-D-galactosyl-sn-glycerol + UDP + H(+). It catalyses the reaction 1-(9Z-octadecenoyl)-2-hexadecanoyl-sn-glycerol + UDP-alpha-D-galactose = 1-(9Z-octadecenoyl)-2-hexadecanoyl-3-beta-D-galactosyl-sn-glycerol + UDP + H(+). The catalysed reaction is 1,2-di-(9Z-octadecenoyl)-sn-glycerol + UDP-alpha-D-galactose = 1,2-di-(9Z-octadecenoyl)-3-beta-D-galactosyl-sn-glycerol + UDP + H(+). Activated by phosphatidate (PA) and phosphatidylglycerol (PG). Inhibited by galvestine-1. In terms of biological role, involved in the synthesis of the major structural component of photosynthetic membranes. Required for proper thylakoid membrane biogenesis. Does not discriminate between prokaryotic (18:1/16:0) or eukaryotic (18:2/18:2) 1,2-diacylglycerol species, but operates with some preference for the prokaryotic one. Is responsible for most galactolipid synthesis in chloroplasts. Required for the formation of thylakoid membranes and functional photosynthetic electron transport during cotyledons greening in young seedlings. May link galactolipid synthesis with the coordinated transcriptional regulation of chloroplasts and other organelles during cotyledon greening. The polypeptide is Monogalactosyldiacylglycerol synthase 1, chloroplastic (Arabidopsis thaliana (Mouse-ear cress)).